The primary structure comprises 131 residues: Profilin-1 (131 aa).

This sequence belongs to the profilin family. In terms of assembly, occurs in many kinds of cells as a complex with monomeric actin in a 1:1 ratio. As to expression, expressed at low levels roots, leaves, stems, flowers and siliques. Expressed in leaf epidermal cells, trichomes and stem epidermal cells. Detected in phloem exudates (at protein level).

It is found in the cytoplasm. The protein resides in the cytoskeleton. In terms of biological role, binds to actin monomers and regulates the organization of the actin cytoskeleton. At high concentrations, profilin prevents the polymerization of actin, whereas it enhances it at low concentrations. At low concentrations, associates with the poly-proline motif of formins to enhance actin filament elongation rate. Binds ACT1, ACT7 and ACT11 and inhibits actin polymerization. Coordinates the stochastic dynamic properties of actin filaments by modulating formin-mediated actin nucleation and assembly during axial cell expansion. Binds G-actin and poly-L-proline in vitro. Inhibits cell growth of various pathogenic fungal strains. May play a role as antifungal proteins in the defense system against fungal pathogen attacks. The polypeptide is Profilin-1 (Arabidopsis thaliana (Mouse-ear cress)).